A 144-amino-acid polypeptide reads, in one-letter code: MKIKTIIAVFGVLFSAHALADVTNAEKLVYKYTNIAHSANPMYEAPSITDGKIFFNRKFKTPSGKEAACASCHTNNPANVGKNIVTGKEIPPLAPRVNTKRFTDIDKVEDEFTKHCNDILGADCSPSEKANFIAYLLTETKPTK.

The first 20 residues, 1–20 (MKIKTIIAVFGVLFSAHALA), serve as a signal peptide directing secretion. Heme c is bound by residues Cys-69, Cys-72, His-73, and His-115. The cysteines at positions 116 and 124 are disulfide-linked.

As to quaternary structure, monomer. Post-translationally, binds 1 heme c group covalently per subunit. The heme is low-spin in the oxidized state but switches to a high-spin form upon reduction, due to the dissociation of one of the axial histidines, His-115.

The chain is Cytochrome c'' (cycA) from Methylophilus methylotrophus (Bacterium W3A1).